Consider the following 808-residue polypeptide: Protein NLP5 (808 aa).

Positions 56–68 (PTQDTSNSLSQMY) are enriched in polar residues. Residues 56-83 (PTQDTSNSLSQMYGQDCPERSSLEDQNQ) form a disordered region. The RWP-RK domain maps to 536-617 (NRVTEKKRTK…IDSVEGVSGH (82 aa)). Positions 660-680 (SPGSSCSHSSSCSSETQVIKE) are disordered. The segment covering 663-673 (SSCSHSSSCSS) has biased composition (low complexity). Positions 710–793 (FLRVKVSYEE…QTIKLLLQLS (84 aa)) constitute a PB1 domain.

The protein localises to the nucleus. Its function is as follows. Probable transcription factor. This Arabidopsis thaliana (Mouse-ear cress) protein is Protein NLP5 (NLP5).